A 95-amino-acid chain; its full sequence is Defensin-A3 (95 aa).

An N-terminal signal peptide occupies residues 1–19 (MRTLGLLLALLFLAAQTPA). Residues 20–61 (QLMGEEAEEATGRPEATEAQEAAAALMAARAADRHVTDPEQQ) constitute a propeptide that is removed on maturation. 3 disulfide bridges follow: C66/C93, C68/C82, and C72/C92.

Belongs to the alpha-defensin family. Highly expressed in spleen, and expressed at lower levels in intestin and lung.

It localises to the secreted. Has antimicrobial activity. This is Defensin-A3 from Ornithorhynchus anatinus (Duckbill platypus).